The following is a 504-amino-acid chain: Diacylglycerol O-acyltransferase 1B (504 aa).

Positions 1 to 72 (MAISDEPESV…VNSQQQNEKQ (72 aa)) are disordered. Residues 24 to 41 (SATSTAGLFNSPETTTDS) are compositionally biased toward polar residues. The span at 53 to 65 (DDSINSDDAAVNS) shows a compositional bias: low complexity. 7 helical membrane passes run 108–128 (HAGLFNLCIVVLVAVNSRLII), 152–172 (WPLFMCCLSLVVFPFAAFIVE), 184–204 (VVVVLHIIITSTSLFYPVLVI), 209–229 (SAFVSGVTLMLFSCVVWLKLV), 259–279 (YPYNVSFKSLAYFLVAPTLCY), 301–321 (LIIFTGVMGFIIEQYINPIVQ), and 348–368 (VWLCMFYCFFHLWLNILAELL). The short motif at 375–381 (FYKDWWN) is the FYXDWWN motif element. The next 3 membrane-spanning stretches (helical) occupy residues 416–436 (AAALLIAFLVSALFHELCIAV), 438–458 (CHIFKLWAFGGIMFQVPLVLI), and 471–491 (VGNMIFWFIFSILGQPMCVLL). The active site involves H430.

It belongs to the membrane-bound acyltransferase family. Sterol o-acyltransferase subfamily. Highly expressed in flowers and pods. Expressed at low levels in roots, stems and leaves.

Its subcellular location is the endoplasmic reticulum membrane. The enzyme catalyses an acyl-CoA + a 1,2-diacyl-sn-glycerol = a triacyl-sn-glycerol + CoA. Its pathway is glycerolipid metabolism; triacylglycerol biosynthesis. Major contributors to triacylglycerol (TAG) synthesis and oil accumulation in developing seeds. Catalyzes the acylation of the sn-3 hydroxy group of sn-1,2-diacylglycerol using acyl-CoA. Has a marked preference for oleoyl-CoA and sn-1,2-dioleoylglycerol over vernoloyl-CoA and sn-1,2-divernoloylglycerol. This chain is Diacylglycerol O-acyltransferase 1B, found in Glycine max (Soybean).